We begin with the raw amino-acid sequence, 192 residues long: EF-hand protein 5 (192 aa).

Residues 1–36 (MKDKAPVSSQQDHFSRGGAVGGKPISDVRGTSRPFY) are disordered. EF-hand domains are found at residues 46 to 80 (AELAEGFRVLSNGQKTISIPMKEVSALMASVGLHL), 81 to 118 (SDEEFHEVMRVFGQGEQTNTEELSFKDFLSLMMCEVDD), 119 to 154 (TMLEEMRGAFLHYDKQKTGFVTKKQFTELFATGGEC), and 155 to 190 (STPEEVEELLTIAEQDETDDKIDYNRFINELIHRLN). Threonine 100, glutamate 102, aspartate 107, aspartate 132, and threonine 136 together coordinate Ca(2+).

The protein is EF-hand protein 5 of Trypanosoma brucei brucei.